The chain runs to 386 residues: Succinate--CoA ligase [ADP-forming] subunit beta (386 aa).

Positions 9 to 244 (KAVLRSYGVS…LEEEDSKEIE (236 aa)) constitute an ATP-grasp domain. ATP contacts are provided by residues K46, 53 to 55 (GRG), E99, C102, and E107. Mg(2+) contacts are provided by N199 and D213. Residues N264 and 321–323 (GIM) contribute to the substrate site.

The protein belongs to the succinate/malate CoA ligase beta subunit family. As to quaternary structure, heterotetramer of two alpha and two beta subunits. Mg(2+) serves as cofactor.

It catalyses the reaction succinate + ATP + CoA = succinyl-CoA + ADP + phosphate. The catalysed reaction is GTP + succinate + CoA = succinyl-CoA + GDP + phosphate. It participates in carbohydrate metabolism; tricarboxylic acid cycle; succinate from succinyl-CoA (ligase route): step 1/1. Its function is as follows. Succinyl-CoA synthetase functions in the citric acid cycle (TCA), coupling the hydrolysis of succinyl-CoA to the synthesis of either ATP or GTP and thus represents the only step of substrate-level phosphorylation in the TCA. The beta subunit provides nucleotide specificity of the enzyme and binds the substrate succinate, while the binding sites for coenzyme A and phosphate are found in the alpha subunit. The protein is Succinate--CoA ligase [ADP-forming] subunit beta of Bacillus mycoides (strain KBAB4) (Bacillus weihenstephanensis).